A 147-amino-acid polypeptide reads, in one-letter code: Large ribosomal subunit protein uL13 (147 aa).

The protein belongs to the universal ribosomal protein uL13 family. Part of the 50S ribosomal subunit.

This protein is one of the early assembly proteins of the 50S ribosomal subunit, although it is not seen to bind rRNA by itself. It is important during the early stages of 50S assembly. In Pseudarthrobacter chlorophenolicus (strain ATCC 700700 / DSM 12829 / CIP 107037 / JCM 12360 / KCTC 9906 / NCIMB 13794 / A6) (Arthrobacter chlorophenolicus), this protein is Large ribosomal subunit protein uL13.